The primary structure comprises 329 residues: NADH-quinone oxidoreductase subunit H (329 aa).

Transmembrane regions (helical) follow at residues 9 to 29, 42 to 62, 75 to 95, 117 to 137, 154 to 174, 188 to 208, 238 to 258, 269 to 291, and 309 to 329; these read LIKILILVAVFSALGGFATYI, GPCYVGPFGLLQVAADGIKLF, FIFTLAPIIAMVSAFVSMAPI, IGFLFFLAVGSAGIYAPILAG, IQLLSFEVVSTLTILAPLMVV, GGFLDWLVFKQPLAFVLFLIA, LKWGMFFLAEYAHLFAFSFVI, WGFIPGGIAILIKAGFFVFLSMW, and WKIMLPLALLNIVLTGIVILI.

It belongs to the complex I subunit 1 family. In terms of assembly, NDH-1 is composed of 14 different subunits. Subunits NuoA, H, J, K, L, M, N constitute the membrane sector of the complex.

It localises to the cell inner membrane. It carries out the reaction a quinone + NADH + 5 H(+)(in) = a quinol + NAD(+) + 4 H(+)(out). Its function is as follows. NDH-1 shuttles electrons from NADH, via FMN and iron-sulfur (Fe-S) centers, to quinones in the respiratory chain. The immediate electron acceptor for the enzyme in this species is believed to be ubiquinone. Couples the redox reaction to proton translocation (for every two electrons transferred, four hydrogen ions are translocated across the cytoplasmic membrane), and thus conserves the redox energy in a proton gradient. This subunit may bind ubiquinone. The polypeptide is NADH-quinone oxidoreductase subunit H (Helicobacter pylori (strain J99 / ATCC 700824) (Campylobacter pylori J99)).